The sequence spans 254 residues: Dolichol-phosphate mannosyltransferase subunit 1 (254 aa).

Residues P25, Y27, E29, V56, D58, D111, A112, D113, R140, and R227 each coordinate GDP-alpha-D-mannose. D113 contacts Mg(2+). D113 contributes to the Mn(2+) binding site.

Belongs to the glycosyltransferase 2 family. In terms of assembly, component of the dolichol-phosphate mannose (DPM) synthase complex composed of dpm1, dpm2 and dpm3. It depends on Mg(2+) as a cofactor. Requires Mn(2+) as cofactor. Ca(2+) is required as a cofactor.

It localises to the endoplasmic reticulum. It catalyses the reaction a di-trans,poly-cis-dolichyl phosphate + GDP-alpha-D-mannose = a di-trans,poly-cis-dolichyl beta-D-mannosyl phosphate + GDP. Its pathway is protein modification; protein glycosylation. In terms of biological role, transfers mannose from GDP-mannose to dolichol monophosphate to form dolichol phosphate mannose (Dol-P-Man) which is the mannosyl donor in pathways leading to N-glycosylation, glycosyl phosphatidylinositol membrane anchoring, and O-mannosylation of proteins; catalytic subunit of the dolichol-phosphate mannose (DPM) synthase complex. This Dictyostelium discoideum (Social amoeba) protein is Dolichol-phosphate mannosyltransferase subunit 1 (dpm1).